The primary structure comprises 596 residues: Pentatricopeptide repeat-containing protein At5g38730 (596 aa).

PPR repeat units follow at residues 132–166, 167–201, 202–236, 237–271, 272–302, 306–340, 341–375, 376–410, 411–445, 446–480, 481–515, and 516–550; these read VSHV…GLKP, HLQA…GVVA, NIHV…GVFP, DIFT…GVAP, NIVT…IKDD, NHVT…GFSP, GVVT…KIEP, DNIT…GLKL, DMYS…GFSP, GYAT…GLCA, DVAL…GLVG, and DSVI…RLMV.

Belongs to the PPR family. P subfamily.

The protein is Pentatricopeptide repeat-containing protein At5g38730 of Arabidopsis thaliana (Mouse-ear cress).